Here is a 470-residue protein sequence, read N- to C-terminus: Nuclear receptor ROR-beta (470 aa).

Residues 18-93 constitute a DNA-binding region (nuclear receptor); the sequence is VIPCKICGDK…LGMSRDAVKF (76 aa). NR C4-type zinc fingers lie at residues 21-41 and 57-81; these read CKIC…CEGC and CPRQ…LQKC. A compositionally biased stretch (basic and acidic residues) spans 104-117; it reads LYAEVQKHQQRLQE. Residues 104–127 form a disordered region; it reads LYAEVQKHQQRLQEQRQQQSGEAE. Positions 222 to 460 constitute an NR LBD domain; the sequence is EIDRIAQNII…TLFPPLYKEL (239 aa). The AF-2 motif lies at 456–461; it reads LYKELF.

It belongs to the nuclear hormone receptor family. NR1 subfamily. In terms of assembly, monomer. Interacts with CRX.

The protein resides in the nucleus. It localises to the nucleoplasm. Functionally, nuclear receptor that binds DNA as a monomer to ROR response elements (RORE) containing a single core motif half-site 5'-AGGTCA-3' preceded by a short A-T-rich sequence. Considered to have intrinsic transcriptional activity, have some natural ligands such as all-trans retinoic acid (ATRA) and other retinoids which act as inverse agonists repressing the transcriptional activity. Required for normal postnatal development of rod and cone photoreceptor cells. Modulates rod photoreceptors differentiation at least by inducing the transcription factor NRL-mediated pathway. In cone photoreceptor cells, regulates transcription of OPN1SW. Involved in the regulation of the period length and stability of the circadian rhythm. May control cytoarchitectural patterning of neocortical neurons during development. May act in a dose-dependent manner to regulate barrel formation upon innervation of layer IV neurons by thalamocortical axons. May play a role in the suppression of osteoblastic differentiation through the inhibition of RUNX2 transcriptional activity. In terms of biological role, isoform 1 is critical for hindlimb motor control and for the differentiation of amacrine and horizontal cells in the retina. Regulates the expression of PTF1A synergistically with FOXN4. In Homo sapiens (Human), this protein is Nuclear receptor ROR-beta (RORB).